The following is a 397-amino-acid chain: Trans-2-enoyl-CoA reductase [NADH] (397 aa).

NAD(+) contacts are provided by residues G53 to Y58, F79 to E80, D116 to A117, and L144 to A145. Substrate is bound at residue Y230. Catalysis depends on Y240, which acts as the Proton donor. NAD(+) is bound by residues K249 and L276–T278.

The protein belongs to the TER reductase family. Monomer.

The enzyme catalyses a 2,3-saturated acyl-CoA + NAD(+) = a (2E)-enoyl-CoA + NADH + H(+). Its pathway is lipid metabolism; fatty acid biosynthesis. Its activity is regulated as follows. Inhibited by lauroyl-CoA. Involved in the fatty acid synthesis (FAS II). Catalyzes the reduction of the carbon-carbon double bond of crotonyl-CoA to yield butyryl-CoA. In vitro it can also use hexenoyl-CoA and dodecenoyl-CoA as substrates. The polypeptide is Trans-2-enoyl-CoA reductase [NADH] (Treponema denticola (strain ATCC 35405 / DSM 14222 / CIP 103919 / JCM 8153 / KCTC 15104)).